Consider the following 428-residue polypeptide: Adenylosuccinate synthetase (428 aa).

Residues glycine 12 to lysine 18 and glycine 40 to threonine 42 contribute to the GTP site. Catalysis depends on aspartate 13, which acts as the Proton acceptor. Mg(2+) contacts are provided by aspartate 13 and glycine 40. Residues aspartate 13 to lysine 16, asparagine 38 to histidine 41, threonine 129, arginine 143, glutamine 224, threonine 239, and arginine 303 each bind IMP. Catalysis depends on histidine 41, which acts as the Proton donor. Residue valine 299–arginine 305 coordinates substrate. GTP is bound by residues arginine 305, lysine 331–aspartate 333, and glycine 413–glycine 415.

The protein belongs to the adenylosuccinate synthetase family. Homodimer. It depends on Mg(2+) as a cofactor.

Its subcellular location is the cytoplasm. It catalyses the reaction IMP + L-aspartate + GTP = N(6)-(1,2-dicarboxyethyl)-AMP + GDP + phosphate + 2 H(+). It participates in purine metabolism; AMP biosynthesis via de novo pathway; AMP from IMP: step 1/2. Its function is as follows. Plays an important role in the de novo pathway of purine nucleotide biosynthesis. Catalyzes the first committed step in the biosynthesis of AMP from IMP. This Saccharopolyspora erythraea (strain ATCC 11635 / DSM 40517 / JCM 4748 / NBRC 13426 / NCIMB 8594 / NRRL 2338) protein is Adenylosuccinate synthetase.